The following is a 1851-amino-acid chain: Voltage-dependent calcium channel type A subunit alpha-1 (1851 aa).

At 1 to 38 (MGGPKKEENPPGGGPTSLFILTEDNPIRKYTRFIIEWP) the chain is on the cytoplasmic side. Residues 25-316 (NPIRKYTRFI…LVLGVLSGEF (292 aa)) form an I repeat. Residues 39 to 57 (PFEYAVLLTIIANCVVLAL) traverse the membrane as a helical segment. Residues 58–75 (EEHLPGGDKTVLAQKLEK) are Extracellular-facing. Residues 76 to 95 (TEAYFLCIFCVEASLKILAL) traverse the membrane as a helical segment. Residues 96 to 107 (GLVLHKHSYLRN) are Cytoplasmic-facing. A helical transmembrane segment spans residues 108–128 (IWNIMDFFVVVTGFMTQYPQI). Residues 129–133 (GPEVD) lie on the Extracellular side of the membrane. Residues 134 to 152 (LRTLRAIRVLRPLKLVSGI) traverse the membrane as a helical segment. At 153 to 171 (PSLQVVLKSIIKAMAPLLQ) the chain is on the cytoplasmic side. The chain crosses the membrane as a helical span at residues 172–191 (IGLLVLFAIVIFAIIGLEFY). Residues 192–288 (SGALHKTCYS…WTNDALGSAF (97 aa)) are Extracellular-facing. N-linked (GlcNAc...) asparagine glycosylation is found at N234 and N235. A helical membrane pass occupies residues 289–313 (NWIYFVPLIVIGSFFMLNLVLGVLS). At 314–441 (GEFSNERNRV…FWIRHTVKTQ (128 aa)) the chain is on the cytoplasmic side. Residues 381–417 (RKKLKSLGKSKSTDTEEEEAEEDYGDDGYLKTRSKPQ) form a disordered region. Residues 395 to 406 (TEEEEAEEDYGD) are compositionally biased toward acidic residues. One copy of the II repeat lies at 427 to 670 (EKRFRFWIRH…VFLAIAVDNL (244 aa)). A helical membrane pass occupies residues 442–460 (WFYWFVIVLVFLNTVCVAV). The Extracellular segment spans residues 461–475 (EHYGQPSFLTEFLYY). The chain crosses the membrane as a helical span at residues 476 to 495 (AEFIFLGLFMSEMFIKMYAL). Residues 496–503 (GPRIYFES) are Cytoplasmic-facing. The chain crosses the membrane as a helical span at residues 504 to 522 (SFNRFDCVVISGSIFEVIW). Over 523 to 531 (SEVKGGSFG) the chain is Extracellular. Residues 532–550 (LSVLRALRLLRIFKVTKYW) form a helical membrane-spanning segment. Residues 551–569 (SSLRNLVISLLNSMRSIIS) are Cytoplasmic-facing. A helical transmembrane segment spans residues 570-589 (LLFLLFLFILIFALLGMQLF). The Extracellular portion of the chain corresponds to 590–642 (GGQFNLPGGTPETNFNTFPIALLTVFQILTGEDWNEVMYQGIISQGGAQKGMI). Residues 643 to 667 (YSIYFIVLVLFGNYTLLNVFLAIAV) traverse the membrane as a helical segment. Over 668–767 (DNLANAQELT…IRRGAHWVVN (100 aa)) the chain is Cytoplasmic. Positions 710-741 (ENGDGAVAPSKSKGKKKEEEKKEEEEVTEGPK) are disordered. One copy of the III repeat lies at 762 to 1049 (AHWVVNLPYF…IITFQEQGEA (288 aa)). Residues 768 to 786 (LPYFDFFIMVVISMSSIAL) form a helical membrane-spanning segment. Over 787 to 802 (AAEDPVRENSRRNKIL) the chain is Extracellular. Residues 803–822 (NYFDYAFTGVFTIEMLLKIV) form a helical membrane-spanning segment. The Cytoplasmic portion of the chain corresponds to 823 to 834 (DLGVILHPGSYL). The helical transmembrane segment at 835-853 (REFWNIMDAVVVICAAVSF) threads the bilayer. Residues 854-866 (GFDMSGSSAGQNL) are Extracellular-facing. Residue N865 is glycosylated (N-linked (GlcNAc...) asparagine). Residues 867 to 885 (STIKSLRVLRVLRPLKTIK) form a helical membrane-spanning segment. Residues 886–904 (RVPKLKAVFDCVVNSLKNV) lie on the Cytoplasmic side of the membrane. The helical transmembrane segment at 905-924 (VNILIVYILFQFIFSVIGVQ) threads the bilayer. Topologically, residues 925–1013 (LFNGKFFYCT…EDRGPIQNFR (89 aa)) are extracellular. Residues 1014–1038 (IEMSIFYIVYFIVFPFFFVNIFVAL) traverse the membrane as a helical segment. Residues 1039 to 1093 (IIITFQEQGEAELQDGEIDKNQKSCIDFTIGARPLERYMPKNRNTFKYKVWRIVV) lie on the Cytoplasmic side of the membrane. Residues 1086 to 1347 (YKVWRIVVST…DNFDYLTRDS (262 aa)) form an IV repeat. Residues 1094 to 1122 (STPFEYFIMMLIVFNTLLLMMKYHNQGDM) form a helical membrane-spanning segment. Topologically, residues 1123 to 1127 (YEKSL) are extracellular. The chain crosses the membrane as a helical span at residues 1128-1147 (KYINMGFTGMFSVETVLKII). Residues 1148–1155 (GFGVKNFF) are Cytoplasmic-facing. Residues 1156-1174 (KDPWNIFDLITVLGSIVDA) form a helical membrane-spanning segment. Topologically, residues 1175–1184 (LWMEFGHDDS) are extracellular. The helical transmembrane segment at 1185 to 1203 (NSINVGFLRLFRAARLIKL) threads the bilayer. The Cytoplasmic portion of the chain corresponds to 1204–1222 (LRQGYTIRILLWTFVQSFK). Residues 1223 to 1242 (ALPYVCLLIAMLFFIYAIIG) form a helical membrane-spanning segment. At 1243–1308 (MQVFGNIKLG…DAEKAPGEYC (66 aa)) the chain is on the extracellular side. The interval 1306 to 1348 (EYCGSTLAYAYFVSFIFFCSFLMLNLFVAVIMDNFDYLTRDSS) is phenylalkylamine binding. Residues 1309 to 1333 (GSTLAYAYFVSFIFFCSFLMLNLFV) traverse the membrane as a helical segment. At 1334–1851 (AVIMDNFDYL…HSDSDEEDWC (518 aa)) the chain is on the cytoplasmic side. Positions 1353 to 1388 (HHLDEFVRIWAEYDPNATGKIHYTEMYDMLKNMDPP) constitute an EF-hand domain. Residues D1366, N1368, T1370, K1372, and E1377 each coordinate Ca(2+). Disordered regions lie at residues 1513–1572 (DASR…HHDI), 1588–1653 (TRHP…SPAR), 1685–1764 (RAGI…DRDR), and 1823–1851 (VLPS…EDWC). A compositionally biased stretch (basic residues) spans 1589–1600 (RHPRHGNSHPRY). Over residues 1604-1619 (SWSASTSPARSPSPSR) the composition is skewed to low complexity. Composition is skewed to polar residues over residues 1637–1649 (YGTT…SRSP) and 1698–1710 (KPST…TNIN). Basic and acidic residues predominate over residues 1734 to 1764 (HHRDLLRDPRDMYYSSRERERDRERLRDRDR).

This sequence belongs to the calcium channel alpha-1 subunit (TC 1.A.1.11) family. In terms of tissue distribution, expressed widely in the embryonic nervous system.

Its subcellular location is the membrane. In terms of biological role, voltage-sensitive calcium channels (VSCC) mediate the entry of calcium ions into excitable cells and are also involved in a variety of calcium-dependent processes, including muscle contraction, neurotransmitter release, gene expression, cell motility, cell division and cell death. Probably encodes a dihydropyridine-insensitive current. Vital for survival to adulthood. This chain is Voltage-dependent calcium channel type A subunit alpha-1 (cac), found in Drosophila melanogaster (Fruit fly).